A 152-amino-acid chain; its full sequence is Protein Smg homolog (152 aa).

It belongs to the Smg family.

The sequence is that of Protein Smg homolog from Nitrosomonas eutropha (strain DSM 101675 / C91 / Nm57).